The primary structure comprises 266 residues: Manganese catalase (266 aa).

A Mn(2+)-binding site is contributed by Glu-35. Ca(2+) contacts are provided by Asp-57 and Asp-61. Positions 66, 69, 148, and 181 each coordinate Mn(2+). Residues Asn-218, Ser-220, and Gly-222 each coordinate Ca(2+). The segment at Glu-243–Gly-266 is disordered. The segment covering Lys-255–Gly-266 has biased composition (basic and acidic residues).

Belongs to the manganese catalase family. In terms of assembly, homohexamer. Ca(2+) is required as a cofactor. It depends on Mn(2+) as a cofactor.

The catalysed reaction is 2 H2O2 = O2 + 2 H2O. Functionally, catalyzes the decomposition of hydrogen peroxide into water and oxygen. This chain is Manganese catalase, found in Lactiplantibacillus plantarum (Lactobacillus plantarum).